Reading from the N-terminus, the 100-residue chain is Small ribosomal subunit protein uS14c (100 aa).

Belongs to the universal ribosomal protein uS14 family. In terms of assembly, part of the 30S ribosomal subunit.

It localises to the plastid. The protein localises to the chloroplast. Functionally, binds 16S rRNA, required for the assembly of 30S particles. This Nymphaea alba (White water-lily) protein is Small ribosomal subunit protein uS14c.